Reading from the N-terminus, the 65-residue chain is DNA-directed RNA polymerase subunit Rpo10 (65 aa).

Residues Cys-7, Cys-10, Cys-44, and Cys-45 each contribute to the Zn(2+) site.

The protein belongs to the archaeal Rpo10/eukaryotic RPB10 RNA polymerase subunit family. As to quaternary structure, part of the RNA polymerase complex. Zn(2+) serves as cofactor.

The protein localises to the cytoplasm. It catalyses the reaction RNA(n) + a ribonucleoside 5'-triphosphate = RNA(n+1) + diphosphate. In terms of biological role, DNA-dependent RNA polymerase (RNAP) catalyzes the transcription of DNA into RNA using the four ribonucleoside triphosphates as substrates. This chain is DNA-directed RNA polymerase subunit Rpo10, found in Nanoarchaeum equitans (strain Kin4-M).